A 150-amino-acid chain; its full sequence is C-type lectin mosGCTL-7 (150 aa).

An N-terminal signal peptide occupies residues 1–17; sequence MQLVHVLVVLLSVVAHA. The C-type lectin domain occupies 18–140; that stretch reads KKFFIPNLKA…CRGFKAYIVC (123 aa). Residue Asn-67 is glycosylated (N-linked (GlcNAc...) asparagine). A disulfide bridge connects residues Cys-111 and Cys-131.

As to quaternary structure, interacts with putative receptor-type tyrosine-protein phosphatase mosPTP-1; the interaction probably mediates the recruitment of Japanese encephalitis virus particles in complex with C-type lectin mosGCTL-7 to the cell surface. In terms of assembly, (Microbial infection) Interacts with envelope protein E (glycosylated) of Japanese encephalitis virus in a calcium-dependent manner.

The protein localises to the secreted. Its function is as follows. Carbohydrate-binding protein. (Microbial infection) Facilitates Japanese encephalitis virus infection in mosquitoes probably via capturing viral particles and presenting them to a ligand on the cell surface, thereby facilitating viral entry. The polypeptide is C-type lectin mosGCTL-7 (Aedes aegypti (Yellowfever mosquito)).